We begin with the raw amino-acid sequence, 80 residues long: Small ribosomal subunit protein uS17 (80 aa).

The protein belongs to the universal ribosomal protein uS17 family. In terms of assembly, part of the 30S ribosomal subunit.

In terms of biological role, one of the primary rRNA binding proteins, it binds specifically to the 5'-end of 16S ribosomal RNA. This Chelativorans sp. (strain BNC1) protein is Small ribosomal subunit protein uS17.